The chain runs to 628 residues: Serine/threonine-protein phosphatase 2A regulatory subunit psrA (628 aa).

The segment covering 1 to 22 (MKNDHINYQQNLSQSPILNSNK) has biased composition (polar residues). Disordered stretches follow at residues 1–61 (MKND…QIPF), 500–558 (KKKQ…DKPS), and 577–628 (SSHR…YTFT). 2 stretches are compositionally biased toward low complexity: residues 23–58 (NQTQQNQQQQQQQQQQNPQQQQQFQHQQVPQLSPQQ) and 524–547 (QINQNNNNNNNNINNNNNNNNNNN). The span at 600 to 618 (NNHTNHDSEIENEVKEDFR) shows a compositional bias: basic and acidic residues.

It belongs to the phosphatase 2A regulatory subunit B56 family. In terms of assembly, PP2A consists of a trimeric holoenzyme, composed of a 37 kDa catalytic subunit (C subunit) and a 65 kDa constant regulatory subunit (A subunit), that associates with a variety of regulatory subunits (B subunit) such as phr2AB (B55) and psrA (B56 homolog). The trimer may partially dissociates into a core 'AC' dimer equally active compared to the trimer. Seems to play a role in proper anterior patterning (pstO and pstAB).

It is found in the cytoplasm. The protein resides in the cytosol. Functionally, involved in developmental cell fate decision. The protein is Serine/threonine-protein phosphatase 2A regulatory subunit psrA (psrA) of Dictyostelium discoideum (Social amoeba).